The sequence spans 865 residues: Anaphase-promoting complex subunit 6 (865 aa).

TPR repeat units lie at residues 11–42 (IEKQ…LNLV), 46–75 (SKEY…LIQK), and 88–149 (EDYQ…LQIL). The tract at residues 153–293 (NDSSENMDDE…NNNNNNNNNF (141 aa)) is disordered. The segment covering 183-202 (NCDDDDDDDDDDDDDDDDEK) has biased composition (acidic residues). Low complexity predominate over residues 249-292 (NKNNNKNNNNNNNNNNNNNNNNNNNNNNNNNNNNNNNNNNNNNN). TPR repeat units lie at residues 300-331 (IRSS…ALLT), 336-359 (FEAF…LLEK), 366-438 (DSWI…DIST), 478-506 (DIQT…ILKQ), 515-542 (CLMV…LVDS), 573-602 (AISW…STTL), 607-635 (GASW…TSSR), 642-670 (LPLL…AKDI), and 675-709 (PMIF…KIKS). A compositionally biased stretch (low complexity) spans 403-434 (SNNNTFGANNNNNNNNNNNNNNNNNNNNNSNN). The interval 403 to 436 (SNNNTFGANNNNNNNNNNNNNNNNNNNNNSNNDI) is disordered. The tract at residues 738 to 767 (GIGNNNNNNNNRRTTTTTTTTSNNQKKNSS) is disordered. TPR repeat units lie at residues 777–809 (ESWE…SLSL) and 814–843 (PSTY…SLSI).

This sequence belongs to the APC6/CDC16 family. As to quaternary structure, the APC/C is composed of at least 13 subunits that stay tightly associated throughout the cell cycle: anapc1, anapc2, anapc3, anapc4, anapc5, anapc6, anapc7, anapc8, anapc10, anapc11, cdc20, cdc26 and cdh1.

The protein localises to the nucleus. The protein operates within protein modification; protein ubiquitination. In terms of biological role, component of the anaphase promoting complex/cyclosome (APC/C), a cell cycle-regulated E3 ubiquitin-protein ligase complex that controls progression through mitosis and the G1 phase of the cell cycle. In Dictyostelium discoideum (Social amoeba), this protein is Anaphase-promoting complex subunit 6 (anapc6).